The primary structure comprises 82 residues: RNA-binding protein Hfq (82 aa).

The 61-residue stretch at Asp-11–Ile-71 folds into the Sm domain.

The protein belongs to the Hfq family. As to quaternary structure, homohexamer.

In terms of biological role, RNA chaperone that binds small regulatory RNA (sRNAs) and mRNAs to facilitate mRNA translational regulation in response to envelope stress, environmental stress and changes in metabolite concentrations. Also binds with high specificity to tRNAs. The protein is RNA-binding protein Hfq of Bradyrhizobium sp. (strain BTAi1 / ATCC BAA-1182).